Here is a 404-residue protein sequence, read N- to C-terminus: Cysteine desulfurase IscS (404 aa).

Pyridoxal 5'-phosphate contacts are provided by residues 75-76 (AT), asparagine 155, glutamine 183, and 203-205 (SAH). Residue lysine 206 is modified to N6-(pyridoxal phosphate)lysine. Position 243 (threonine 243) interacts with pyridoxal 5'-phosphate. The active-site Cysteine persulfide intermediate is cysteine 328. A [2Fe-2S] cluster-binding site is contributed by cysteine 328.

This sequence belongs to the class-V pyridoxal-phosphate-dependent aminotransferase family. NifS/IscS subfamily. Homodimer. Forms a heterotetramer with IscU, interacts with other sulfur acceptors. Pyridoxal 5'-phosphate is required as a cofactor.

It localises to the cytoplasm. It carries out the reaction (sulfur carrier)-H + L-cysteine = (sulfur carrier)-SH + L-alanine. Its pathway is cofactor biosynthesis; iron-sulfur cluster biosynthesis. In terms of biological role, master enzyme that delivers sulfur to a number of partners involved in Fe-S cluster assembly, tRNA modification or cofactor biosynthesis. Catalyzes the removal of elemental sulfur atoms from cysteine to produce alanine. Functions as a sulfur delivery protein for Fe-S cluster synthesis onto IscU, an Fe-S scaffold assembly protein, as well as other S acceptor proteins. This is Cysteine desulfurase IscS from Stutzerimonas stutzeri (strain A1501) (Pseudomonas stutzeri).